The following is a 134-amino-acid chain: Profilin-5 (134 aa).

Cys13 and Cys118 are oxidised to a cystine. The Involved in PIP2 interaction motif lies at 84 to 100; that stretch reads AVIRGKKGSGGITIKKT. Thr114 is subject to Phosphothreonine.

The protein belongs to the profilin family. In terms of assembly, occurs in many kinds of cells as a complex with monomeric actin in a 1:1 ratio. In terms of processing, phosphorylated by MAP kinases.

Its subcellular location is the cytoplasm. It localises to the cytoskeleton. In terms of biological role, binds to actin and affects the structure of the cytoskeleton. At high concentrations, profilin prevents the polymerization of actin, whereas it enhances it at low concentrations. This chain is Profilin-5, found in Olea europaea (Common olive).